We begin with the raw amino-acid sequence, 341 residues long: Chitin synthase 3 complex protein CSI2 (341 aa).

Residues 35 to 70 show a composition bias toward low complexity; the sequence is SSSTKAADSSSKGSSSAKTTTSLGKSSVTSKDVSSS. Disordered stretches follow at residues 35–78, 272–291, and 298–341; these read SSST…SSTK, DSLS…GKFT, and NYTS…DGKE.

Its function is as follows. Appears to be a structural component of the chitin synthase 3 complex. This is Chitin synthase 3 complex protein CSI2 (CSI2) from Saccharomyces cerevisiae (strain ATCC 204508 / S288c) (Baker's yeast).